The chain runs to 222 residues: Deoxyribose-phosphate aldolase (222 aa).

Residue aspartate 91 is the Proton donor/acceptor of the active site. Residue lysine 153 is the Schiff-base intermediate with acetaldehyde of the active site. Lysine 182 serves as the catalytic Proton donor/acceptor.

It belongs to the DeoC/FbaB aldolase family. DeoC type 1 subfamily.

It localises to the cytoplasm. The enzyme catalyses 2-deoxy-D-ribose 5-phosphate = D-glyceraldehyde 3-phosphate + acetaldehyde. Its pathway is carbohydrate degradation; 2-deoxy-D-ribose 1-phosphate degradation; D-glyceraldehyde 3-phosphate and acetaldehyde from 2-deoxy-alpha-D-ribose 1-phosphate: step 2/2. Its function is as follows. Catalyzes a reversible aldol reaction between acetaldehyde and D-glyceraldehyde 3-phosphate to generate 2-deoxy-D-ribose 5-phosphate. This Mycoplasma capricolum subsp. capricolum (strain California kid / ATCC 27343 / NCTC 10154) protein is Deoxyribose-phosphate aldolase.